Consider the following 518-residue polypeptide: MHHARNVQFSNIHVSTVDEDVRPDFVEVDTKGWGDQGDGTYRNPXSDPDVIRVGNKXYMVASDFHXMGMQVLESDDMVXWRYISQIYRRFNEPGWDANLHYAGGSWAPSIRYHSGLFYVYFCTPDEGLYMSTASNPAGPWAPLHLVKRVAKWEDPCPFWDEDGQAYIGRSQHGAGPIIVHRMSADGKTLLDEGKTVYEGPIAEGTKFMKRNGWYYLIIPEGGVGTGWQTVLRARNIYGPYERRIVLEQGSTGVNGPHQGALVDAPDGSWWFYHFQETPVLGRVVHLQPARWEADWPVIGVDYDKNGIGEPVATWKKPVSSVGTAGFQTCDDSNDALGLHWQWNHNPVDTHWNLTDRKGWLTLKAMPADSLKMVRNMLTQKVVGYQSESTTKVSIKGDSYAGLFCSGKLFCGVGLCKDGVFIEFGGQRKIIDKGSYQEVWFKVTNDCEQNRHLFYYSIDGEHYQPAGSAFAMSGGYWKGIRVGCLTTFLQAKRLLRARHLRMLNSTISIKNSPNSLADC.

Asp-47 acts as the Proton acceptor in catalysis. Glu-203 functions as the Proton donor in the catalytic mechanism.

Belongs to the glycosyl hydrolase 43 family.

The catalysed reaction is Hydrolysis of (1-&gt;4)-beta-D-xylans, to remove successive D-xylose residues from the non-reducing termini.. This chain is Putative beta-xylosidase, found in Xylanibacter ruminicola (Prevotella ruminicola).